The chain runs to 78 residues: Large ribosomal subunit protein bL28 (78 aa).

A disordered region spans residues 1–20 (MSRVCQVTGKGPVTGNNISH).

This sequence belongs to the bacterial ribosomal protein bL28 family.

This Azotobacter vinelandii (strain DJ / ATCC BAA-1303) protein is Large ribosomal subunit protein bL28.